A 425-amino-acid chain; its full sequence is Serine hydroxymethyltransferase (425 aa).

Residues leucine 126 and 130 to 132 contribute to the (6S)-5,6,7,8-tetrahydrofolate site; that span reads GHL. Lysine 234 carries the post-translational modification N6-(pyridoxal phosphate)lysine.

This sequence belongs to the SHMT family. As to quaternary structure, homodimer. The cofactor is pyridoxal 5'-phosphate.

It is found in the cytoplasm. The catalysed reaction is (6R)-5,10-methylene-5,6,7,8-tetrahydrofolate + glycine + H2O = (6S)-5,6,7,8-tetrahydrofolate + L-serine. It participates in one-carbon metabolism; tetrahydrofolate interconversion. The protein operates within amino-acid biosynthesis; glycine biosynthesis; glycine from L-serine: step 1/1. In terms of biological role, catalyzes the reversible interconversion of serine and glycine with tetrahydrofolate (THF) serving as the one-carbon carrier. This reaction serves as the major source of one-carbon groups required for the biosynthesis of purines, thymidylate, methionine, and other important biomolecules. Also exhibits THF-independent aldolase activity toward beta-hydroxyamino acids, producing glycine and aldehydes, via a retro-aldol mechanism. The sequence is that of Serine hydroxymethyltransferase from Desulfotalea psychrophila (strain LSv54 / DSM 12343).